Here is a 177-residue protein sequence, read N- to C-terminus: MRCPYCGGSETQVKDSRPSEDGAAIRRRRVCPDCAGRFTTFERVQLREVVVLKRSGKRVPFDRDKLQRSIDVALRKRAVDPERIERLVSGITRQLESAGEPEVTSEAIGELVMAGLKGLDDVAYVRFASVYKNFREARDFEELLGTLSDGMPVPAAAPEAEGDPEPEASGRRRAGRP.

The segment at 3–34 (CPYCGGSETQVKDSRPSEDGAAIRRRRVCPDC) is a zinc-finger region. One can recognise an ATP-cone domain in the interval 49-139 (VVVLKRSGKR…VYKNFREARD (91 aa)). Residues 148-177 (SDGMPVPAAAPEAEGDPEPEASGRRRAGRP) form a disordered region.

It belongs to the NrdR family. It depends on Zn(2+) as a cofactor.

Functionally, negatively regulates transcription of bacterial ribonucleotide reductase nrd genes and operons by binding to NrdR-boxes. The protein is Transcriptional repressor NrdR of Methylobacterium radiotolerans (strain ATCC 27329 / DSM 1819 / JCM 2831 / NBRC 15690 / NCIMB 10815 / 0-1).